A 168-amino-acid chain; its full sequence is Peptide methionine sulfoxide reductase MsrA 2 (168 aa).

Residue cysteine 11 is part of the active site.

It belongs to the MsrA Met sulfoxide reductase family.

The catalysed reaction is L-methionyl-[protein] + [thioredoxin]-disulfide + H2O = L-methionyl-(S)-S-oxide-[protein] + [thioredoxin]-dithiol. It catalyses the reaction [thioredoxin]-disulfide + L-methionine + H2O = L-methionine (S)-S-oxide + [thioredoxin]-dithiol. Functionally, has an important function as a repair enzyme for proteins that have been inactivated by oxidation. Catalyzes the reversible oxidation-reduction of methionine sulfoxide in proteins to methionine. The protein is Peptide methionine sulfoxide reductase MsrA 2 of Rhodopirellula baltica (strain DSM 10527 / NCIMB 13988 / SH1).